Consider the following 206-residue polypeptide: Large ribosomal subunit protein uL4 (206 aa).

The segment at 46–95 (GNRAQKTRAEVKHSTKKPWRQKGTGRARSGMTSSPLWRKGGRAFPNKPDE) is disordered. Positions 59–70 (STKKPWRQKGTG) are enriched in basic residues.

It belongs to the universal ribosomal protein uL4 family. Part of the 50S ribosomal subunit.

One of the primary rRNA binding proteins, this protein initially binds near the 5'-end of the 23S rRNA. It is important during the early stages of 50S assembly. It makes multiple contacts with different domains of the 23S rRNA in the assembled 50S subunit and ribosome. Functionally, forms part of the polypeptide exit tunnel. This chain is Large ribosomal subunit protein uL4, found in Neisseria meningitidis serogroup C (strain 053442).